Consider the following 182-residue polypeptide: PRA1 family protein D (182 aa).

At alanine 2 the chain carries N-acetylalanine. 3 helical membrane-spanning segments follow: residues 68–88, 107–127, and 129–149; these read LITR…WFFL, IVAV…GVWL, and ALTT…LRGT. A disordered region spans residues 163–182; that stretch reads PMLSTSGGGNDGARGDYSGI.

The protein belongs to the PRA1 family. Interacts with PRA1F2 and PRA1F3. Interacts with the cauliflower mosaic virus (CaMV) movement protein (via N-terminus). Expressed in hypocotyls, roots, lateral roots, lateral root caps, columella cells, leaves, shoot apex, stems and flowers.

Its subcellular location is the endosome membrane. May be involved in both secretory and endocytic intracellular trafficking in the endosomal/prevacuolar compartments. The polypeptide is PRA1 family protein D (PRA1D) (Arabidopsis thaliana (Mouse-ear cress)).